The chain runs to 182 residues: Adenine phosphoribosyltransferase (182 aa).

Belongs to the purine/pyrimidine phosphoribosyltransferase family. In terms of assembly, homodimer.

It localises to the cytoplasm. It carries out the reaction AMP + diphosphate = 5-phospho-alpha-D-ribose 1-diphosphate + adenine. The protein operates within purine metabolism; AMP biosynthesis via salvage pathway; AMP from adenine: step 1/1. In terms of biological role, catalyzes a salvage reaction resulting in the formation of AMP, that is energically less costly than de novo synthesis. The protein is Adenine phosphoribosyltransferase of Pseudomonas aeruginosa (strain LESB58).